Reading from the N-terminus, the 606-residue chain is Aspartate--tRNA(Asp/Asn) ligase (606 aa).

Glutamate 175 contributes to the L-aspartate binding site. The segment at 199–202 (QLFK) is aspartate. An L-aspartate-binding site is contributed by arginine 221. ATP-binding positions include 221–223 (RDE) and glutamine 230. Histidine 453 is an L-aspartate binding site. Glutamate 487 is a binding site for ATP. Arginine 494 lines the L-aspartate pocket. ATP is bound at residue 539 to 542 (GWDR). Residues 564–606 (GGVDPLTDAPGTIPAEQRKETGVDFKPEKAAKAAQGEKAGKES) form a disordered region. Positions 579-594 (EQRKETGVDFKPEKAA) are enriched in basic and acidic residues.

This sequence belongs to the class-II aminoacyl-tRNA synthetase family. Type 1 subfamily. As to quaternary structure, homodimer.

The protein resides in the cytoplasm. The catalysed reaction is tRNA(Asx) + L-aspartate + ATP = L-aspartyl-tRNA(Asx) + AMP + diphosphate. Functionally, aspartyl-tRNA synthetase with relaxed tRNA specificity since it is able to aspartylate not only its cognate tRNA(Asp) but also tRNA(Asn). Reaction proceeds in two steps: L-aspartate is first activated by ATP to form Asp-AMP and then transferred to the acceptor end of tRNA(Asp/Asn). This chain is Aspartate--tRNA(Asp/Asn) ligase, found in Corynebacterium aurimucosum (strain ATCC 700975 / DSM 44827 / CIP 107346 / CN-1) (Corynebacterium nigricans).